The primary structure comprises 206 residues: Dephospho-CoA kinase (206 aa).

A DPCK domain is found at 4–200; sequence IVALTGGIGS…AHYLQLASQF (197 aa). Residue 12 to 17 coordinates ATP; sequence GSGKST.

Belongs to the CoaE family.

It is found in the cytoplasm. The catalysed reaction is 3'-dephospho-CoA + ATP = ADP + CoA + H(+). The protein operates within cofactor biosynthesis; coenzyme A biosynthesis; CoA from (R)-pantothenate: step 5/5. Functionally, catalyzes the phosphorylation of the 3'-hydroxyl group of dephosphocoenzyme A to form coenzyme A. This Shigella boydii serotype 4 (strain Sb227) protein is Dephospho-CoA kinase.